Reading from the N-terminus, the 436-residue chain is Chorion-specific transcription factor GCMa (436 aa).

The GCM DNA-binding region spans 14-169 (LSWDINDMKL…KLEAEARRAM (156 aa)). Residues C76, C82, C86, C113, C116, C125, H152, and H154 each contribute to the Zn(2+) site.

In terms of processing, polyubiquitinated in the presence of UBE2D2 and FBXW2 (in vitro).

Its subcellular location is the nucleus. Its function is as follows. Transcription factor involved in the control of expression of placental growth factor (PGF) and other placenta-specific genes. Binds to the trophoblast-specific element 2 (TSE2) of the aromatase gene enhancer. Binds to the SYDE1 promoter. Has a central role in mediating the differentiation of trophoblast cells along both the villous and extravillous pathways in placental development. This is Chorion-specific transcription factor GCMa (Gcm1) from Rattus norvegicus (Rat).